The primary structure comprises 228 residues: MLTYLEQKINYEFKDKTLLLEALTHSSWAHEGKNEKVSNERLEFLGDSVLSLVISEYLYKNRKDLEEGSLSKYRAEIVCEPSLARCARKIELGSFLRMGKGEEISGGRDRDSILADAMEALLAAVYLDGGLEAVRRVILDLFKEIIDEVLKGIIYRDYKTRLQEVVQSMEVGKITYELVEEIGPDHNKTFVTQVKIGDVVLGIGQGKSKKESEQAAAMEALSKLGILK.

One can recognise an RNase III domain in the interval 2–130; it reads LTYLEQKINY…LLAAVYLDGG (129 aa). Glu43 lines the Mg(2+) pocket. Residue Asp47 is part of the active site. Residues Asp116 and Glu119 each coordinate Mg(2+). The active site involves Glu119. A DRBM domain is found at 157–226; that stretch reads DYKTRLQEVV…AMEALSKLGI (70 aa).

Belongs to the ribonuclease III family. As to quaternary structure, homodimer. Mg(2+) is required as a cofactor.

It localises to the cytoplasm. It carries out the reaction Endonucleolytic cleavage to 5'-phosphomonoester.. In terms of biological role, digests double-stranded RNA. Involved in the processing of primary rRNA transcript to yield the immediate precursors to the large and small rRNAs (23S and 16S). Processes some mRNAs, and tRNAs when they are encoded in the rRNA operon. Processes pre-crRNA and tracrRNA of type II CRISPR loci if present in the organism. The polypeptide is Ribonuclease 3 (Caldanaerobacter subterraneus subsp. tengcongensis (strain DSM 15242 / JCM 11007 / NBRC 100824 / MB4) (Thermoanaerobacter tengcongensis)).